The following is a 104-amino-acid chain: L-rhamnose mutarotase (104 aa).

Tyr18 lines the substrate pocket. Residue His22 is the Proton donor of the active site. Residues Tyr41 and Trp76 to Trp77 contribute to the substrate site.

The protein belongs to the rhamnose mutarotase family. Homodimer.

The protein resides in the cytoplasm. The enzyme catalyses alpha-L-rhamnose = beta-L-rhamnose. The protein operates within carbohydrate metabolism; L-rhamnose metabolism. In terms of biological role, involved in the anomeric conversion of L-rhamnose. In Yersinia pseudotuberculosis serotype O:1b (strain IP 31758), this protein is L-rhamnose mutarotase.